The chain runs to 449 residues: Bifunctional F420 biosynthesis protein FbiB (449 aa).

The tract at residues 1-245 is coenzyme F420:L-glutamate ligase; that stretch reads MSPAGEHGTA…PGTEDLFWLG (245 aa). GTP-binding positions include 21 to 24, Ser51, and Lys56; that span reads LPEF. Asp110 lines the a divalent metal cation pocket. Asn113 contributes to the GTP binding site. Positions 151 and 152 each coordinate a divalent metal cation. The tract at residues 246–449 is dehydro-coenzyme F420-0 reductase; the sequence is TAEAIELGRR…ADPGDLLIRK (204 aa). FMN-binding positions include 261 to 265 and Ala289; that span reads RRSVR. Position 321 (Asp321) interacts with coenzyme F420-(gamma-Glu)n. The FMN site is built by Gly400 and Arg437.

It in the N-terminal section; belongs to the CofE family. Requires Mg(2+) as cofactor. It depends on Mn(2+) as a cofactor. The cofactor is K(+).

It carries out the reaction oxidized coenzyme F420-0 + GTP + L-glutamate = oxidized coenzyme F420-1 + GDP + phosphate + H(+). The enzyme catalyses oxidized coenzyme F420-1 + GTP + L-glutamate = oxidized coenzyme F420-2 + GDP + phosphate + H(+). It catalyses the reaction oxidized coenzyme F420-(gamma-L-Glu)(n) + GTP + L-glutamate = oxidized coenzyme F420-(gamma-L-Glu)(n+1) + GDP + phosphate + H(+). The catalysed reaction is oxidized coenzyme F420-0 + FMN + H(+) = dehydro coenzyme F420-0 + FMNH2. It functions in the pathway cofactor biosynthesis; coenzyme F420 biosynthesis. Bifunctional enzyme that catalyzes the GTP-dependent successive addition of multiple gamma-linked L-glutamates to the L-lactyl phosphodiester of 7,8-didemethyl-8-hydroxy-5-deazariboflavin (F420-0) to form polyglutamated F420 derivatives, and the FMNH2-dependent reduction of dehydro-F420-0 to form F420-0. The protein is Bifunctional F420 biosynthesis protein FbiB of Mycobacterium avium (strain 104).